The primary structure comprises 332 residues: Invasin IpaD (332 aa).

The span at 1-25 shows a compositional bias: low complexity; it reads MNITTLTNSISTSSFSPNNTNGSST. Positions 1–43 are disordered; that stretch reads MNITTLTNSISTSSFSPNNTNGSSTETVNSDIKTTTSSHPVSS. A compositionally biased stretch (polar residues) spans 26 to 43; that stretch reads ETVNSDIKTTTSSHPVSS. Residues 44–77 adopt a coiled-coil conformation; that stretch reads LTMLNDTLHNIRTTNQALKKELSQKTLTKTSLEE. The ipaB binding stretch occupies residues 192-267; the sequence is VNSLKKALEE…KSLDNLGGNG (76 aa).

It belongs to the invasin protein D family.

Its subcellular location is the secreted. In terms of biological role, required for bacterial invasion of host cells. Controls IpaB and IpaC secretion, and the efficiency with which they are physically inserted into target cell membranes. These proteins are exported via T3SS to form a pore in the host membrane that allows the translocation of the other effectors into the host cytoplasm. Along with IpaB, is essential for both blocking secretion through the Mxi/Spa translocon in the absence of a secretion-inducing signal, and for controlling the level of secretion in the presence of this signal. The protein is Invasin IpaD (ipaD) of Shigella flexneri.